The following is a 306-amino-acid chain: tRNA pseudouridine synthase B (306 aa).

The Nucleophile role is filled by Asp43.

It belongs to the pseudouridine synthase TruB family. Type 1 subfamily.

The catalysed reaction is uridine(55) in tRNA = pseudouridine(55) in tRNA. Functionally, responsible for synthesis of pseudouridine from uracil-55 in the psi GC loop of transfer RNAs. The protein is tRNA pseudouridine synthase B of Heliobacterium modesticaldum (strain ATCC 51547 / Ice1).